We begin with the raw amino-acid sequence, 357 residues long: F-box only protein 25 (357 aa).

Residues 1–83 form an interaction with beta-actin region; sequence MPFLGQDWRS…NDTNTQCFYR (83 aa). Residues 225–273 form the F-box domain; the sequence is LTLSDLPVHMLSNILYRFSDGWDIVTLGQVTPTLSALSEDRQLWKKLCQ.

In terms of assembly, part of a SCF (SKP1-cullin-F-box) protein ligase complex consisting of FBXO25, SKP1, CUL1 and RBX1. Interacts directly with SKP1 and CUL1. Interacts (via C-terminus) with beta-actin (via N-terminus).

The protein localises to the nucleus. Its pathway is protein modification; protein ubiquitination. In terms of biological role, substrate-recognition component of the SCF (SKP1-CUL1-F-box protein)-type E3 ubiquitin ligase complex. May play a role in accumulation of expanded polyglutamine (polyQ) protein huntingtin (HTT). The sequence is that of F-box only protein 25 (FBXO25) from Bos taurus (Bovine).